The following is a 46-amino-acid chain: Esculentin-1 (46 aa).

Cysteine 40 and cysteine 46 are oxidised to a cystine.

Expressed by the skin glands.

It is found in the secreted. In terms of biological role, antimicrobial peptide. Stimulates insulin release by BRIN-BD11 cells in vitro. The polypeptide is Esculentin-1 (Pelophylax saharicus (Sahara frog)).